A 165-amino-acid chain; its full sequence is Lipoprotein signal peptidase (165 aa).

Helical transmembrane passes span 9 to 29, 69 to 89, and 98 to 118; these read FLAI…VLLY, KYFL…FLFL, and IRFS…DIVF. Catalysis depends on residues Asp124 and Asp142. Residues 133–153 form a helical membrane-spanning segment; it reads WFFPTFNFADIFISLGTLIFI.

It belongs to the peptidase A8 family.

It is found in the cell inner membrane. The catalysed reaction is Release of signal peptides from bacterial membrane prolipoproteins. Hydrolyzes -Xaa-Yaa-Zaa-|-(S,diacylglyceryl)Cys-, in which Xaa is hydrophobic (preferably Leu), and Yaa (Ala or Ser) and Zaa (Gly or Ala) have small, neutral side chains.. It participates in protein modification; lipoprotein biosynthesis (signal peptide cleavage). Its function is as follows. This protein specifically catalyzes the removal of signal peptides from prolipoproteins. In Chlamydia abortus (strain DSM 27085 / S26/3) (Chlamydophila abortus), this protein is Lipoprotein signal peptidase.